Here is a 226-residue protein sequence, read N- to C-terminus: PKHD-type hydroxylase Pfl01_0799 (226 aa).

The 101-residue stretch at lysine 78–serine 178 folds into the Fe2OG dioxygenase domain. Fe cation contacts are provided by histidine 96, aspartate 98, and histidine 159. Arginine 169 lines the 2-oxoglutarate pocket.

Requires Fe(2+) as cofactor. The cofactor is L-ascorbate.

The protein is PKHD-type hydroxylase Pfl01_0799 of Pseudomonas fluorescens (strain Pf0-1).